Reading from the N-terminus, the 447-residue chain is MKRVVIAGTSSMVGKTTISTGIMNALSKKNNVQPYKVGPDYIDPTYHTKATENTSRNLDSFFMDETQIRSLFKRHSQNKDISIIEGVRGLFEGISPYNDVGSTASVAKTIDSPIILLMDARSLTRSAAAIIKGFKSFDSELNIKGVIFNKIRGDGHLNKLKEAVKYYDGEIEIVGAIKRDENLAVAERHLGLVPTPEKTEELGKQIEFWGDTVLECLDIDKIIEISDVDFEIPVDNKNKDETLWKVDKNSSKIAIAFDESFNFYYHDNFDALKENGAKLEFFSPIHDFEIPNCDILYLGGGYPEIFSKELSKNTSMIESIRNFDGKIYGECGGLMYLTNSINGVDMLKLINADSIMTKNVQGLSYVIGSFKKDCIIGKEKETFKAHEFHYSKLININENDFSYEINRGTGIIDKLDGISIKDGRIVGGYAHQHAVGNPYFASCLSKL.

A GATase cobBQ-type domain is found at 252 to 439 (KIAIAFDESF…AHQHAVGNPY (188 aa)). The active-site Nucleophile is the Cys-331.

This sequence belongs to the CobB/CbiA family. It depends on Mg(2+) as a cofactor.

It carries out the reaction cob(II)yrinate + 2 L-glutamine + 2 ATP + 2 H2O = cob(II)yrinate a,c diamide + 2 L-glutamate + 2 ADP + 2 phosphate + 2 H(+). The catalysed reaction is Ni-sirohydrochlorin + 2 L-glutamine + 2 ATP + 2 H2O = Ni-sirohydrochlorin a,c-diamide + 2 L-glutamate + 2 ADP + 2 phosphate + 2 H(+). Its pathway is cofactor biosynthesis; adenosylcobalamin biosynthesis; cob(II)yrinate a,c-diamide from sirohydrochlorin (anaerobic route): step 10/10. Functionally, catalyzes the ATP-dependent amidation of the two carboxylate groups at positions a and c of cobyrinate, using either L-glutamine or ammonia as the nitrogen source. Involved in the biosynthesis of the unique nickel-containing tetrapyrrole coenzyme F430, the prosthetic group of methyl-coenzyme M reductase (MCR), which plays a key role in methanogenesis and anaerobic methane oxidation. Catalyzes the ATP-dependent amidation of the two carboxylate groups at positions a and c of Ni-sirohydrochlorin, using L-glutamine or ammonia as the nitrogen source. The polypeptide is Cobyrinate a,c-diamide synthase (Methanococcus vannielii (strain ATCC 35089 / DSM 1224 / JCM 13029 / OCM 148 / SB)).